A 142-amino-acid polypeptide reads, in one-letter code: Peptide methionine sulfoxide reductase MsrB (142 aa).

The 124-residue stretch at 2 to 125 (IKKNKNDLNE…NSAAVQFIPY (124 aa)) folds into the MsrB domain. Cys-114 functions as the Nucleophile in the catalytic mechanism.

The protein belongs to the MsrB Met sulfoxide reductase family.

It catalyses the reaction L-methionyl-[protein] + [thioredoxin]-disulfide + H2O = L-methionyl-(R)-S-oxide-[protein] + [thioredoxin]-dithiol. The sequence is that of Peptide methionine sulfoxide reductase MsrB from Staphylococcus saprophyticus subsp. saprophyticus (strain ATCC 15305 / DSM 20229 / NCIMB 8711 / NCTC 7292 / S-41).